We begin with the raw amino-acid sequence, 336 residues long: Inositol 2-dehydrogenase (336 aa).

This sequence belongs to the Gfo/Idh/MocA family. As to quaternary structure, homotetramer.

The enzyme catalyses myo-inositol + NAD(+) = scyllo-inosose + NADH + H(+). In terms of biological role, involved in the oxidation of myo-inositol (MI) to 2-keto-myo-inositol (2KMI or 2-inosose). The protein is Inositol 2-dehydrogenase of Pseudomonas fluorescens (strain ATCC BAA-477 / NRRL B-23932 / Pf-5).